Here is a 200-residue protein sequence, read N- to C-terminus: NAD(P)H-quinone oxidoreductase subunit 6, chloroplastic (200 aa).

The next 5 membrane-spanning stretches (helical) occupy residues 13–33, 35–55, 64–84, 101–121, and 156–176; these read VFFV…VFLT, IVYS…LYLL, AQIL…VMLI, TITL…ILSI, and LLPF…AITI.

It belongs to the complex I subunit 6 family. NDH is composed of at least 16 different subunits, 5 of which are encoded in the nucleus.

Its subcellular location is the plastid. The protein resides in the chloroplast thylakoid membrane. The catalysed reaction is a plastoquinone + NADH + (n+1) H(+)(in) = a plastoquinol + NAD(+) + n H(+)(out). The enzyme catalyses a plastoquinone + NADPH + (n+1) H(+)(in) = a plastoquinol + NADP(+) + n H(+)(out). Functionally, NDH shuttles electrons from NAD(P)H:plastoquinone, via FMN and iron-sulfur (Fe-S) centers, to quinones in the photosynthetic chain and possibly in a chloroplast respiratory chain. The immediate electron acceptor for the enzyme in this species is believed to be plastoquinone. Couples the redox reaction to proton translocation, and thus conserves the redox energy in a proton gradient. The polypeptide is NAD(P)H-quinone oxidoreductase subunit 6, chloroplastic (ndhG) (Anthoceros angustus (Hornwort)).